A 255-amino-acid polypeptide reads, in one-letter code: tRNA uridine(34) hydroxylase (255 aa).

Positions 131–225 constitute a Rhodanese domain; that stretch reads AAPDTLVLDT…YLEEVPEAQS (95 aa). C185 functions as the Cysteine persulfide intermediate in the catalytic mechanism.

This sequence belongs to the TrhO family.

It catalyses the reaction uridine(34) in tRNA + AH2 + O2 = 5-hydroxyuridine(34) in tRNA + A + H2O. Functionally, catalyzes oxygen-dependent 5-hydroxyuridine (ho5U) modification at position 34 in tRNAs. This Bradyrhizobium diazoefficiens (strain JCM 10833 / BCRC 13528 / IAM 13628 / NBRC 14792 / USDA 110) protein is tRNA uridine(34) hydroxylase.